A 158-amino-acid chain; its full sequence is NAD(P)H-quinone oxidoreductase subunit N (158 aa).

Belongs to the complex I NdhN subunit family. As to quaternary structure, NDH-1 can be composed of about 15 different subunits; different subcomplexes with different compositions have been identified which probably have different functions.

It localises to the cellular thylakoid membrane. It carries out the reaction a plastoquinone + NADH + (n+1) H(+)(in) = a plastoquinol + NAD(+) + n H(+)(out). The catalysed reaction is a plastoquinone + NADPH + (n+1) H(+)(in) = a plastoquinol + NADP(+) + n H(+)(out). NDH-1 shuttles electrons from an unknown electron donor, via FMN and iron-sulfur (Fe-S) centers, to quinones in the respiratory and/or the photosynthetic chain. The immediate electron acceptor for the enzyme in this species is believed to be plastoquinone. Couples the redox reaction to proton translocation, and thus conserves the redox energy in a proton gradient. Cyanobacterial NDH-1 also plays a role in inorganic carbon-concentration. In Prochlorococcus marinus (strain MIT 9312), this protein is NAD(P)H-quinone oxidoreductase subunit N.